The chain runs to 486 residues: Lipase 1 (486 aa).

A disulfide bridge connects residues cysteine 58 and cysteine 82. Serine 193 (acyl-ester intermediate) is an active-site residue. The active-site Charge relay system is aspartate 303. Asparagine 332 is a glycosylation site (N-linked (GlcNAc...) asparagine). Residue histidine 392 is the Charge relay system of the active site.

The protein belongs to the type-B carboxylesterase/lipase family.

The enzyme catalyses a triacylglycerol + H2O = a diacylglycerol + a fatty acid + H(+). The sequence is that of Lipase 1 (LIP1) from Yarrowia lipolytica (strain CLIB 122 / E 150) (Yeast).